The sequence spans 190 residues: Crossover junction endodeoxyribonuclease RuvC (190 aa).

Catalysis depends on residues aspartate 8, glutamate 67, and aspartate 139. Aspartate 8, glutamate 67, and aspartate 139 together coordinate Mg(2+).

It belongs to the RuvC family. As to quaternary structure, homodimer which binds Holliday junction (HJ) DNA. The HJ becomes 2-fold symmetrical on binding to RuvC with unstacked arms; it has a different conformation from HJ DNA in complex with RuvA. In the full resolvosome a probable DNA-RuvA(4)-RuvB(12)-RuvC(2) complex forms which resolves the HJ. Mg(2+) is required as a cofactor.

It localises to the cytoplasm. It carries out the reaction Endonucleolytic cleavage at a junction such as a reciprocal single-stranded crossover between two homologous DNA duplexes (Holliday junction).. Functionally, the RuvA-RuvB-RuvC complex processes Holliday junction (HJ) DNA during genetic recombination and DNA repair. Endonuclease that resolves HJ intermediates. Cleaves cruciform DNA by making single-stranded nicks across the HJ at symmetrical positions within the homologous arms, yielding a 5'-phosphate and a 3'-hydroxyl group; requires a central core of homology in the junction. The consensus cleavage sequence is 5'-(A/T)TT(C/G)-3'. Cleavage occurs on the 3'-side of the TT dinucleotide at the point of strand exchange. HJ branch migration catalyzed by RuvA-RuvB allows RuvC to scan DNA until it finds its consensus sequence, where it cleaves and resolves the cruciform DNA. In Haemophilus influenzae (strain ATCC 51907 / DSM 11121 / KW20 / Rd), this protein is Crossover junction endodeoxyribonuclease RuvC.